The sequence spans 431 residues: Adenylosuccinate synthetase (431 aa).

Residues glycine 12–lysine 18 and glycine 40–threonine 42 each bind GTP. The Proton acceptor role is filled by aspartate 13. The Mg(2+) site is built by aspartate 13 and glycine 40. Residues aspartate 13 to lysine 16, asparagine 38 to histidine 41, threonine 131, arginine 145, glutamine 225, threonine 240, and arginine 304 contribute to the IMP site. Histidine 41 functions as the Proton donor in the catalytic mechanism. Residue threonine 300 to arginine 306 participates in substrate binding. GTP contacts are provided by residues arginine 306, lysine 332 to aspartate 334, and serine 414 to serine 416.

This sequence belongs to the adenylosuccinate synthetase family. Homodimer. It depends on Mg(2+) as a cofactor.

The protein resides in the cytoplasm. It carries out the reaction IMP + L-aspartate + GTP = N(6)-(1,2-dicarboxyethyl)-AMP + GDP + phosphate + 2 H(+). It participates in purine metabolism; AMP biosynthesis via de novo pathway; AMP from IMP: step 1/2. Functionally, plays an important role in the de novo pathway of purine nucleotide biosynthesis. Catalyzes the first committed step in the biosynthesis of AMP from IMP. This chain is Adenylosuccinate synthetase, found in Methylocella silvestris (strain DSM 15510 / CIP 108128 / LMG 27833 / NCIMB 13906 / BL2).